The sequence spans 1388 residues: Kinesin-like protein KIF15-A (1388 aa).

The 339-residue stretch at 26 to 364 (AIKVFVRIRP…LQFAQRAKLI (339 aa)) folds into the Kinesin motor domain. 110–117 (GQTGSGKT) lines the ATP pocket. A coiled-coil region spans residues 369–1383 (VVNEDTQGNV…ENLFLKESKK (1015 aa)). Residues 1127–1156 (EQEKIRPASSNSSSPVVLPETPRTPEGNPY) form a disordered region. Residues 1139-1388 (SSPVVLPETP…KESKKCEHCN (250 aa)) are necessary for its targeting to microtubule minus ends.

The protein belongs to the TRAFAC class myosin-kinesin ATPase superfamily. Kinesin family. KLP2 subfamily. Homodimer. Dimerization is required for targeting to microtubule minus ends. Found in a complex with tpx2 and microtubules. Its association with microtubules and targeting to microtubule minus ends requires tpx2. Strongly expressed in testis and weakly in lung (at protein level).

The protein localises to the cytoplasm. It is found in the cytoskeleton. It localises to the microtubule organizing center. The protein resides in the centrosome. Its subcellular location is the spindle. The protein localises to the spindle pole. Its function is as follows. Plus-end directed kinesin-like motor enzyme involved in mitotic spindle assembly. Required for centrosome separation and maintenance of spindle bipolarity during mitosis. The protein is Kinesin-like protein KIF15-A (kif15-a) of Xenopus laevis (African clawed frog).